The following is a 168-amino-acid chain: Protein GRIM REAPER (168 aa).

Positions 1–30 (MVIKIPNTFIKATSLLSLILYFLIIATSKS) are cleaved as a signal peptide. Asn-59 carries an N-linked (GlcNAc...) asparagine glycan.

The protein belongs to the STIG1 family. As to quaternary structure, interacts with PRK5 and to a lower extent with PRK4. As to expression, highly expressed in flowers, and at very low levels in leaves.

It is found in the secreted. The protein resides in the extracellular space. It localises to the apoplast. Functionally, involved in the regulation of cell death induced by extracellular reactive oxygen species. Only the processed peptide, and not the full length GRI can bind in vivo to the extracellular domain of the receptor PRK5. The GRIp-induced cell death is superoxide and salicylic acid dependent. The protein is Protein GRIM REAPER of Arabidopsis thaliana (Mouse-ear cress).